The primary structure comprises 95 residues: Large ribosomal subunit protein bL27 (95 aa).

The propeptide occupies 1–6 (MILQLF).

The protein belongs to the bacterial ribosomal protein bL27 family. In terms of processing, the N-terminus is cleaved by ribosomal processing cysteine protease Prp.

The sequence is that of Large ribosomal subunit protein bL27 from Caldanaerobacter subterraneus subsp. tengcongensis (strain DSM 15242 / JCM 11007 / NBRC 100824 / MB4) (Thermoanaerobacter tengcongensis).